A 1040-amino-acid chain; its full sequence is Multidrug resistance protein MdtB (1040 aa).

12 consecutive transmembrane segments (helical) span residues F16–I36, L347–A367, I369–L389, L396–I416, I440–F460, F472–P492, W537–I557, L863–I883, F888–A908, I911–V931, I968–V988, and I998–I1018.

It belongs to the resistance-nodulation-cell division (RND) (TC 2.A.6) family. MdtB subfamily. In terms of assembly, part of a tripartite efflux system composed of MdtA, MdtB and MdtC. MdtB forms a heteromultimer with MdtC.

It is found in the cell inner membrane. In terms of biological role, the MdtABC tripartite complex confers resistance against novobiocin and deoxycholate. The polypeptide is Multidrug resistance protein MdtB (Escherichia coli (strain 55989 / EAEC)).